The chain runs to 217 residues: Homeobox protein Hox-B7 (217 aa).

The Antp-type hexapeptide signature appears at isoleucine 126–arginine 131. Positions arginine 137 to asparagine 196 form a DNA-binding region, homeobox. The interval lysine 194–glutamate 217 is disordered.

The protein belongs to the Antp homeobox family. As to quaternary structure, forms a DNA-binding heterodimer with transcription factor PBX1.

It is found in the nucleus. Its function is as follows. Sequence-specific transcription factor which is part of a developmental regulatory system that provides cells with specific positional identities on the anterior-posterior axis. In Homo sapiens (Human), this protein is Homeobox protein Hox-B7 (HOXB7).